A 470-amino-acid chain; its full sequence is ATP synthase subunit beta (470 aa).

Residue 157–164 (GGAGVGKT) participates in ATP binding.

Belongs to the ATPase alpha/beta chains family. In terms of assembly, F-type ATPases have 2 components, CF(1) - the catalytic core - and CF(0) - the membrane proton channel. CF(1) has five subunits: alpha(3), beta(3), gamma(1), delta(1), epsilon(1). CF(0) has three main subunits: a(1), b(2) and c(9-12). The alpha and beta chains form an alternating ring which encloses part of the gamma chain. CF(1) is attached to CF(0) by a central stalk formed by the gamma and epsilon chains, while a peripheral stalk is formed by the delta and b chains.

It localises to the cell membrane. It carries out the reaction ATP + H2O + 4 H(+)(in) = ADP + phosphate + 5 H(+)(out). Produces ATP from ADP in the presence of a proton gradient across the membrane. The catalytic sites are hosted primarily by the beta subunits. The polypeptide is ATP synthase subunit beta (Pelotomaculum thermopropionicum (strain DSM 13744 / JCM 10971 / SI)).